A 305-amino-acid chain; its full sequence is Protein FdhE homolog (305 aa).

The protein belongs to the FdhE family.

Its subcellular location is the cytoplasm. In terms of biological role, necessary for formate dehydrogenase activity. This Actinobacillus pleuropneumoniae serotype 7 (strain AP76) protein is Protein FdhE homolog.